A 710-amino-acid chain; its full sequence is Probable inactive DNA (cytosine-5)-methyltransferase DRM3 (710 aa).

Residues 1 to 21 (MADMRRRNGSGGSSNHERNEQ) form a disordered region. The UBA 1 domain occupies 52 to 92 (SGSNVKSLLIEMGFCPTLVQKAIDENGQDDFELLLEILTKS). Positions 167 to 184 (ESEDSLDGAEINEEDEDV) are enriched in acidic residues. A disordered region spans residues 167-192 (ESEDSLDGAEINEEDEDVTPVTARGP). Positions 198–242 (QLFETMDKTLRLLEMGFSNDEISMAIEKIGTKGQISVLAESIVTG) constitute a UBA 2 domain. A disordered region spans residues 282 to 360 (AQKEDGGGGS…MGDSSSFMET (79 aa)). A compositionally biased stretch (basic and acidic residues) spans 339–350 (YDDRGKRLRPED). The SAM-dependent MTase DRM-type domain maps to 379 to 710 (QPRLSQSLGP…RVTKRVRDMM (332 aa)).

The protein belongs to the class I-like SAM-binding methyltransferase superfamily. DRM-methyltransferase family. Interacts with Pol V.

Its subcellular location is the nucleus. Functionally, catalytically inactive DNA methyltransferase that acts as regulatory factor for DRM2-mediated DNA methylation. Required for maintenance of non-CpG DNA methylation. Required for normal establishment and maintenance of RNA-directed DNA methylation (RdDM) and accumulation of specific repeat-associated small interfering RNAs (siRNAs). Required for nucleolus organizer region (NOR) nuclear organization during interphase. Acts downstream of the production of siRNAs. May promote RNA polymerase V (Pol V) transcriptional elongation or assist in the stabilization of Pol V transcripts. In Arabidopsis thaliana (Mouse-ear cress), this protein is Probable inactive DNA (cytosine-5)-methyltransferase DRM3.